The primary structure comprises 985 residues: DNA polymerase (985 aa).

Residues 936–972 (APSASDASGKRARKGAAPSDDESGSSEDEDAPCEPKC) form a disordered region. Acidic residues predominate over residues 954 to 967 (SDDESGSSEDEDAP).

Belongs to the DNA polymerase type-B family.

It carries out the reaction DNA(n) + a 2'-deoxyribonucleoside 5'-triphosphate = DNA(n+1) + diphosphate. Its function is as follows. Replicates the viral genome, host DNA polymerases cannot substitute for the viral enzyme in this process. The sequence is that of DNA polymerase (POL) from Orgyia pseudotsugata (Douglas-fir tussock moth).